Consider the following 92-residue polypeptide: Putative defensin-like protein 251 (92 aa).

An N-terminal signal peptide occupies residues 1–27; it reads MRCVTSFVVFCILMFFVLNIFTVEVKA. Cystine bridges form between Cys-34/Cys-90, Cys-45/Cys-69, Cys-53/Cys-82, and Cys-67/Cys-84.

The protein belongs to the DEFL family.

Its subcellular location is the secreted. This Arabidopsis thaliana (Mouse-ear cress) protein is Putative defensin-like protein 251 (SCRL12).